A 122-amino-acid polypeptide reads, in one-letter code: Small ribosomal subunit protein bS16 (122 aa).

The segment at Arg85–Glu122 is disordered. Over residues Arg99–Lys110 the composition is skewed to basic and acidic residues. Residues Ala111 to Glu122 are compositionally biased toward low complexity.

Belongs to the bacterial ribosomal protein bS16 family.

The polypeptide is Small ribosomal subunit protein bS16 (Rhizobium etli (strain ATCC 51251 / DSM 11541 / JCM 21823 / NBRC 15573 / CFN 42)).